The chain runs to 245 residues: MFELTGRKALVTGASGGIGEAIARVLHAQGAIVGLHGTRVEKLETLAAELGDRVKLFPANLSNRDEVKALGQKAEADLEGVDILVNNAGITKDGLFVRMSDADWDTVLEVNLTAVFRLTRELTHPMMRRRHGRIINITSVVGVTGNPGQTNYCASKAGMIGFSKSLAQEIATRNITVNCVAPGFIESAMTDKLNDKQKEAIMAAIPTRRMGTSVEVASAVAYLASNEAAYVTGQTIHVNGGLAMI.

Residue 11–35 coordinates NAD(+); sequence VTGASGGIGEAIARVLHAQGAIVGL. Substrate is bound at residue Ser-139. Tyr-152 (proton acceptor) is an active-site residue.

This sequence belongs to the short-chain dehydrogenases/reductases (SDR) family.

Its function is as follows. Proposed to modify Nod factor fatty acyl chain. This is Nodulation protein G (nodG) from Rhizobium sp. (strain N33).